A 748-amino-acid polypeptide reads, in one-letter code: EF-hand domain-containing family member C2 (748 aa).

DM10 domains are found at residues 75 to 182 (DKQV…VKMG), 226 to 366 (DRQV…RSKY), and 428 to 535 (VSNV…EQHA). 2 consecutive EF-hand domains span residues 556 to 591 (EQQKTVKQFFTMSDPSSTGSLPYESFRTLLADLDVE) and 631 to 666 (EKFSEMIQAFTHEDRDRCGQLSSKEARIICKAFRLP).

It is found in the cytoplasm. It localises to the cytoskeleton. The protein resides in the cilium axoneme. Microtubule inner protein (MIP) part of the dynein-decorated doublet microtubules (DMTs) in cilia axoneme, which is required for motile cilia beating. This is EF-hand domain-containing family member C2 (efhc2) from Danio rerio (Zebrafish).